A 257-amino-acid polypeptide reads, in one-letter code: Mitochondrial distribution and morphology protein 12 (257 aa).

Residues 1–256 form the SMP-LTD domain; the sequence is MSFEINWEKL…WPSWVNLDFN (256 aa). The disordered stretch occupies residues 74–98; that stretch reads YEEDNETSSEMHGRDGQNVGESGEE.

This sequence belongs to the MDM12 family. In terms of assembly, component of the ER-mitochondria encounter structure (ERMES) or MDM complex, composed of MMM1, MDM10, MDM12 and MDM34. An MMM1 homodimer associates with one molecule of MDM12 on each side in a pairwise head-to-tail manner, and the SMP-LTD domains of MMM1 and MDM12 generate a continuous hydrophobic tunnel for phospholipid trafficking.

Its subcellular location is the mitochondrion outer membrane. It localises to the endoplasmic reticulum membrane. Functionally, component of the ERMES/MDM complex, which serves as a molecular tether to connect the endoplasmic reticulum (ER) and mitochondria. Components of this complex are involved in the control of mitochondrial shape and protein biogenesis, and function in nonvesicular lipid trafficking between the ER and mitochondria. MDM12 is required for the interaction of the ER-resident membrane protein MMM1 and the outer mitochondrial membrane-resident beta-barrel protein MDM10. The MDM12-MMM1 subcomplex functions in the major beta-barrel assembly pathway that is responsible for biogenesis of all mitochondrial outer membrane beta-barrel proteins, and acts in a late step after the SAM complex. The MDM10-MDM12-MMM1 subcomplex further acts in the TOM40-specific pathway after the action of the MDM12-MMM1 complex. Essential for establishing and maintaining the structure of mitochondria and maintenance of mtDNA nucleoids. This is Mitochondrial distribution and morphology protein 12 from Candida glabrata (strain ATCC 2001 / BCRC 20586 / JCM 3761 / NBRC 0622 / NRRL Y-65 / CBS 138) (Yeast).